We begin with the raw amino-acid sequence, 517 residues long: Lysophosphatidylcholine acyltransferase 1 (517 aa).

Over 1 to 52 (MRFPNRKLHTAVNGGDSGVSTHFRNPFVHELRFTTLQKLKIAVMTVTLFPVR) the chain is Cytoplasmic. Residues 53–73 (LLFAAFMMLLAWPFAFVATVG) traverse the membrane as a helical; Signal-anchor for type II membrane protein segment. Over 74-517 (RSENAVEPLS…SPRNHSKKQD (444 aa)) the chain is Lumenal. Positions 129–134 (HSSYFD) match the HXXXXD motif motif. N-linked (GlcNAc...) asparagine glycosylation occurs at Asn-207. The region spanning 443-478 (VGDLAVSELFRAIDSQDKGKITFDELCSFMEKCPDL) is the EF-hand domain. N-linked (GlcNAc...) asparagine glycosylation is present at Asn-511. The Di-lysine motif signature appears at 514–517 (KKQD).

It belongs to the 1-acyl-sn-glycerol-3-phosphate acyltransferase family.

It localises to the endoplasmic reticulum membrane. Its subcellular location is the golgi apparatus membrane. The protein resides in the cell membrane. It is found in the lipid droplet. The enzyme catalyses a 1-acyl-sn-glycero-3-phosphocholine + an acyl-CoA = a 1,2-diacyl-sn-glycero-3-phosphocholine + CoA. The catalysed reaction is a 1-O-alkyl-sn-glycero-3-phosphocholine + acetyl-CoA = a 1-O-alkyl-2-acetyl-sn-glycero-3-phosphocholine + CoA. It catalyses the reaction a 1-acyl-sn-glycero-3-phosphate + an acyl-CoA = a 1,2-diacyl-sn-glycero-3-phosphate + CoA. It carries out the reaction a 1-O-(1Z-alkenyl)-sn-glycero-3-phosphocholine + an acyl-CoA = a 1-O-(1Z-alkenyl)-2-acyl-sn-glycero-3-phosphocholine + CoA. The enzyme catalyses 1-acyl-sn-glycero-3-phospho-(1'-sn-glycerol) + an acyl-CoA = a 1,2-diacyl-sn-glycero-3-phospho-(1'-sn-glycerol) + CoA. The catalysed reaction is 1-hexadecanoyl-sn-glycero-3-phosphocholine + hexadecanoyl-CoA = 1,2-dihexadecanoyl-sn-glycero-3-phosphocholine + CoA. It catalyses the reaction 1-O-hexadecyl-sn-glycero-3-phosphocholine + hexadecanoyl-CoA = 1-O-hexadecyl-2-hexadecanoyl-sn-glycero-3-phosphocholine + CoA. It carries out the reaction a 1-O-(1Z-alkenyl)-sn-glycero-3-phosphocholine + hexadecanoyl-CoA = 1-O-(1Z)-alkenyl-2-hexadecanoyl-sn-glycero-3-phosphocholine + CoA. The enzyme catalyses 1-hexadecanoyl-sn-glycero-3-phospho-(1'-sn-glycerol) + hexadecanoyl-CoA = 1,2-dihexadecanoyl-sn-glycero-3-phospho-(1'-sn-glycerol) + CoA. The catalysed reaction is 1-dodecanoyl-sn-glycero-3-phosphocholine + hexadecanoyl-CoA = 1-dodecanoyl-2-hexadecanoyl-sn-glycero-3-phosphocholine + CoA. It catalyses the reaction 1-tetradecanoyl-sn-glycero-3-phosphocholine + hexadecanoyl-CoA = 1-tetradecanoyl-2-hexadecanoyl-sn-glycero-3-phosphocholine + CoA. It carries out the reaction 1-O-octadecyl-sn-glycero-3-phosphocholine + hexadecanoyl-CoA = 1-O-octadecyl-2-hexadecanoyl-sn-glycero-3-phosphocholine + CoA. The enzyme catalyses 1-octadecanoyl-sn-glycero-3-phosphocholine + hexadecanoyl-CoA = 1-octadecanoyl-2-hexadecanoyl-sn-glycero-3-phosphocholine + CoA. The catalysed reaction is 1-(9Z-octadecenoyl)-sn-glycero-3-phosphocholine + hexadecanoyl-CoA = 1-(9Z-octadecenoyl)-2-hexadecanoyl-sn-glycero-3-phosphocholine + CoA. It catalyses the reaction 1-eicosanoyl-sn-glycero-3-phosphocholine + hexadecanoyl-CoA = 1-eicosanoyl-2-hexadecanoyl-sn-glycero-3-phosphocholine + CoA. It carries out the reaction hexanoyl-CoA + 1-hexadecanoyl-sn-glycero-3-phosphocholine = 1-hexadecanoyl-2-hexanoyl-sn-glycero-3-phosphocholine + CoA. The enzyme catalyses octanoyl-CoA + 1-hexadecanoyl-sn-glycero-3-phosphocholine = 1-hexadecanoyl-2-octanoyl-sn-glycero-3-phosphocholine + CoA. The catalysed reaction is decanoyl-CoA + 1-hexadecanoyl-sn-glycero-3-phosphocholine = 1-hexadecanoyl-2-decanoyl-sn-glycero-3-phosphocholine + CoA. It catalyses the reaction dodecanoyl-CoA + 1-hexadecanoyl-sn-glycero-3-phosphocholine = 1-hexadecanoyl-2-dodecanoyl-sn-glycero-3-phosphocholine + CoA. It carries out the reaction tetradecanoyl-CoA + 1-hexadecanoyl-sn-glycero-3-phosphocholine = 1-hexadecanoyl-2-tetradecanoyl-sn-glycero-3-phosphocholine + CoA. The enzyme catalyses 1-hexadecanoyl-sn-glycero-3-phosphocholine + (9Z)-octadecenoyl-CoA = 1-hexadecanoyl-2-(9Z-octadecenoyl)-sn-glycero-3-phosphocholine + CoA. The catalysed reaction is (9Z,12Z)-octadecadienoyl-CoA + 1-hexadecanoyl-sn-glycero-3-phosphocholine = 1-hexadecanoyl-2-(9Z,12Z-octadecadienoyl)-sn-glycero-3-phosphocholine + CoA. It catalyses the reaction (4Z,7Z,10Z,13Z,16Z,19Z)-docosahexaenoyl-CoA + 1-hexadecanoyl-sn-glycero-3-phosphocholine = 1-hexadecanoyl-2-(4Z,7Z,10Z,13Z,16Z,19Z-docosahexaenoyl)-sn-glycero-3-phosphocholine + CoA. It carries out the reaction 1-hexadecanoyl-sn-glycero-3-phosphocholine + acetyl-CoA = 1-hexadecanoyl-2-acetyl-sn-glycero-3-phosphocholine + CoA. The enzyme catalyses eicosanoyl-CoA + 1-hexadecanoyl-sn-glycero-3-phosphocholine = 1-hexadecanoyl-2-eicosanoyl-sn-glycero-3-phosphocholine + CoA. The catalysed reaction is 1-O-hexadecyl-sn-glycero-3-phosphocholine + acetyl-CoA = 1-O-hexadecyl-2-acetyl-sn-glycero-3-phosphocholine + CoA. It catalyses the reaction a 1-acyl-sn-glycero-3-phosphocholine + hexadecanoyl-CoA = 1-acyl-2-hexadecanoyl-sn-glycero-3-phosphocholine + CoA. It carries out the reaction a 1-acyl-sn-glycero-3-phosphate + hexadecanoyl-CoA = 1-acyl-2-hexadecanoyl-sn-glycero-3-phosphate + CoA. The enzyme catalyses 1-acyl-sn-glycero-3-phospho-(1'-sn-glycerol) + hexadecanoyl-CoA = 1-acyl-2-hexadecanoyl-sn-glycero-3-phospho-(1'-sn-glycerol) + CoA. It participates in lipid metabolism; phospholipid metabolism. In terms of biological role, exhibits both acyltransferase and acetyltransferase activities. Activity is calcium-independent. Catalyzes the conversion of lysophosphatidylcholine (1-acyl-sn-glycero-3-phosphocholine or LPC) into phosphatidylcholine (1,2-diacyl-sn-glycero-3-phosphocholine or PC). Catalyzes the conversion 1-acyl-sn-glycerol-3-phosphate (lysophosphatidic acid or LPA) into 1,2-diacyl-sn-glycerol-3-phosphate (phosphatidic acid or PA) by incorporating an acyl moiety at the sn-2 position of the glycerol backbone. This is Lysophosphatidylcholine acyltransferase 1 (lpcat1) from Danio rerio (Zebrafish).